The primary structure comprises 333 residues: MQHNQLLEQLYSGHSLSTSESTALFNAVIQGELSNEQIAAMLIALKVREANTEEITGAVAASLQNAKVFPRPDYPFADIVGTGGDGQNTINISTASAIVAASMGAKVAKHGNRSVSSKSGASDVLTALGVNVNVTPEQARQALDEIGVCFLFAQQYHSGFRHVAPVRTALKTHTIFNILGPLINPARPTYHLLGVYAPELVKTYAETAVALEHQHSFVVHGSGLDEVALHGETQVAEIKNGKIEYFTLTPEDFGLKTQSLESLRGGEPQENTQYLTALLQGKGKAEHANAVAANTALLLKLFGYDDLKQNVQNVLAHLASGNAFKTLQKLTTY.

Residues glycine 81, 84–85 (GD), threonine 89, 91–94 (NIST), 109–117 (KHGNRSVSS), and alanine 121 each bind 5-phospho-alpha-D-ribose 1-diphosphate. Glycine 81 serves as a coordination point for anthranilate. Serine 93 is a Mg(2+) binding site. Asparagine 112 is a binding site for anthranilate. Arginine 167 is a binding site for anthranilate. Aspartate 225 and glutamate 226 together coordinate Mg(2+).

Belongs to the anthranilate phosphoribosyltransferase family. In terms of assembly, homodimer. The cofactor is Mg(2+).

The enzyme catalyses N-(5-phospho-beta-D-ribosyl)anthranilate + diphosphate = 5-phospho-alpha-D-ribose 1-diphosphate + anthranilate. It functions in the pathway amino-acid biosynthesis; L-tryptophan biosynthesis; L-tryptophan from chorismate: step 2/5. Its function is as follows. Catalyzes the transfer of the phosphoribosyl group of 5-phosphorylribose-1-pyrophosphate (PRPP) to anthranilate to yield N-(5'-phosphoribosyl)-anthranilate (PRA). This is Anthranilate phosphoribosyltransferase from Haemophilus influenzae (strain 86-028NP).